The following is a 549-amino-acid chain: MNASCFLSALTFVLLIGKSIAWYYNASSELMTYDEASAYCQRDYTHLVAIQNKEEINYLNSTLRYSPSYYWIGIRKVNNVWIWVGTQKPLTEEAKNWAPGEPNNKQRNEDCVEIYIQRPKDSGMWNDERCDKKKLALCYTASCTNTSCSGHGECVETINSYTCKCHPGFLGPKCDQVVTCQEQEYPDHGSLNCTHPFGLFSYNSSCSFSCERGYVPSSMETTVRCTSSGEWSAPAPACHVVECKALTQPAHGVRKCSSNPGSYPWNTTCTFDCEEGYRRVGAQNLQCTSSGVWDNEKPSCKAVTCDAIPRPQNGSVSCSNSTAGALAFKSSCNFTCEHSFTLQGPAQVECSAQGQWTPQIPVCKASQCEALSAPQRGHMKCLPSASAPFQSGSSCKFSCDEGFELKGSRRLQCGPRGEWDSEKPTCAGVQCSSLDLPGKMNMSCSGPAVFGTVCEFTCPEGWTLNGSSILTCGATGRWSAMLPTCEAPANPPRPLVVALSVAATSLLTLSSLIYVLKRFFWKKAKKFVPASSCQSLQSFENYQGPSYII.

The first 21 residues, 1-21 (MNASCFLSALTFVLLIGKSIA), serve as a signal peptide directing secretion. The 118-residue stretch at 22–139 (WYYNASSELM…CDKKKLALCY (118 aa)) folds into the C-type lectin domain. The Extracellular portion of the chain corresponds to 22 to 494 (WYYNASSELM…CEAPANPPRP (473 aa)). Asparagine 25 and asparagine 60 each carry an N-linked (GlcNAc...) asparagine glycan. Intrachain disulfides connect cysteine 40-cysteine 138, cysteine 111-cysteine 130, cysteine 143-cysteine 154, cysteine 148-cysteine 163, cysteine 165-cysteine 174, cysteine 180-cysteine 225, cysteine 193-cysteine 206, cysteine 210-cysteine 238, cysteine 243-cysteine 287, cysteine 256-cysteine 269, cysteine 273-cysteine 300, cysteine 305-cysteine 350, cysteine 336-cysteine 363, cysteine 368-cysteine 413, cysteine 399-cysteine 426, cysteine 431-cysteine 472, and cysteine 458-cysteine 485. Ca(2+) contacts are provided by glutamate 101, asparagine 103, and glutamate 109. Residues 101–109 (EPNNKQRNE), 113–118 (EIYIQR), and 126–128 (NDE) contribute to the a carbohydrate site. The Ca(2+) site is built by asparagine 126 and aspartate 127. Residues 140–175 (TASCTNTSCSGHGECVETINSYTCKCHPGFLGPKCD) enclose the EGF-like domain. N-linked (GlcNAc...) asparagine glycosylation is present at asparagine 145. Sushi domains lie at 178–240 (VTCQ…ACHV), 241–302 (VECK…SCKA), 303–365 (VTCD…VCKA), 366–428 (SQCE…TCAG), and 429–487 (VQCS…TCEA). N-linked (GlcNAc...) asparagine glycosylation is found at asparagine 192 and asparagine 203. The N-linked (GlcNAc...) asparagine glycan is linked to asparagine 266. N-linked (GlcNAc...) asparagine glycosylation is found at asparagine 313, asparagine 320, and asparagine 333. N-linked (GlcNAc...) asparagine glycosylation is found at asparagine 441 and asparagine 465. Residues 495 to 516 (LVVALSVAATSLLTLSSLIYVL) form a helical membrane-spanning segment. Topologically, residues 517 to 549 (KRFFWKKAKKFVPASSCQSLQSFENYQGPSYII) are cytoplasmic.

Belongs to the selectin/LECAM family. As to quaternary structure, interacts with SELPLG/PSGL1 and PODXL2 through the sialyl Lewis X epitope. SELPLG sulfation appears not to be required for this interaction.

Its subcellular location is the cell membrane. Functionally, cell-surface glycoprotein having a role in immunoadhesion. Mediates in the adhesion of blood neutrophils in cytokine-activated endothelium through interaction with SELPLG/PSGL1. May have a role in capillary morphogenesis. This is E-selectin (Sele) from Rattus norvegicus (Rat).